The sequence spans 609 residues: Protein NRT1/ PTR FAMILY 7.1 (609 aa).

A run of 2 helical transmembrane segments spans residues 67 to 87 (IILLVNQGLATLAFFGVGVNL) and 109 to 129 (WTGTVYMFSLVGAFLSDSYWG). Position 133 is a phosphothreonine (T133). Helical transmembrane passes span 136 to 156 (IFQVIFVIGVGLLSFVSWFFL), 173 to 193 (SSLGVAIFYLSVYLVAFGYGG), 216 to 236 (FFSYFYFALNVGALFSNTILV), 243 to 263 (LWTEGFLVSLGSAIVALVAFL), 367 to 387 (PIWLCTIIYSVIFTQMASLFV), 402 to 422 (IPAASMSVFDIFSVFVSTGIY), 438 to 458 (MGIGLIIGIMAMVAAGLTEIQ), 474 to 494 (ILWQIPQYVLVGASEVFMYVG), 516 to 536 (MASMALGNYVSSLMVNIVMAI), and 559 to 579 (FYFLIAALAAIDFVVYLIFAK).

This sequence belongs to the major facilitator superfamily. Proton-dependent oligopeptide transporter (POT/PTR) (TC 2.A.17) family. Expressed in flowers.

It localises to the membrane. This is Protein NRT1/ PTR FAMILY 7.1 (NPF7.1) from Arabidopsis thaliana (Mouse-ear cress).